The primary structure comprises 523 residues: 2-isopropylmalate synthase (523 aa).

The region spanning 5-267 (VIIFDTTLRD…HTRINHQEIW (263 aa)) is the Pyruvate carboxyltransferase domain. 4 residues coordinate Mn(2+): Asp14, His202, His204, and Asn238. Positions 392 to 523 (RLEYFSVQSG…QNKEHNQETV (132 aa)) are regulatory domain.

Belongs to the alpha-IPM synthase/homocitrate synthase family. LeuA type 1 subfamily. Homodimer. Mn(2+) serves as cofactor.

It is found in the cytoplasm. It catalyses the reaction 3-methyl-2-oxobutanoate + acetyl-CoA + H2O = (2S)-2-isopropylmalate + CoA + H(+). The protein operates within amino-acid biosynthesis; L-leucine biosynthesis; L-leucine from 3-methyl-2-oxobutanoate: step 1/4. Catalyzes the condensation of the acetyl group of acetyl-CoA with 3-methyl-2-oxobutanoate (2-ketoisovalerate) to form 3-carboxy-3-hydroxy-4-methylpentanoate (2-isopropylmalate). The sequence is that of 2-isopropylmalate synthase from Cronobacter sakazakii (strain ATCC BAA-894) (Enterobacter sakazakii).